The sequence spans 126 residues: Glycine cleavage system H protein (126 aa).

The 82-residue stretch at 24 to 105 (TLTVGITDHA…AYGVWLFKLK (82 aa)) folds into the Lipoyl-binding domain. N6-lipoyllysine is present on Lys-65.

It belongs to the GcvH family. The glycine cleavage system is composed of four proteins: P, T, L and H. The cofactor is (R)-lipoate.

In terms of biological role, the glycine cleavage system catalyzes the degradation of glycine. The H protein shuttles the methylamine group of glycine from the P protein to the T protein. In Burkholderia vietnamiensis (strain G4 / LMG 22486) (Burkholderia cepacia (strain R1808)), this protein is Glycine cleavage system H protein.